Reading from the N-terminus, the 497-residue chain is Probable pectinesterase 30 (497 aa).

A signal peptide spans 1-21; sequence MLVKVFSFFILMIIMVIGVSK. Residues Asn238 and Asn254 are each glycosylated (N-linked (GlcNAc...) asparagine). Position 263 (Thr263) interacts with substrate. The active-site Proton donor is Asp316. Cys330 and Cys350 are disulfide-bonded. Asp337 functions as the Nucleophile in the catalytic mechanism. Residue Asn385 is glycosylated (N-linked (GlcNAc...) asparagine). Positions 403 and 405 each coordinate substrate.

Belongs to the pectinesterase family. In terms of tissue distribution, expressed in siliques.

It localises to the secreted. The protein resides in the cell wall. The catalysed reaction is [(1-&gt;4)-alpha-D-galacturonosyl methyl ester](n) + n H2O = [(1-&gt;4)-alpha-D-galacturonosyl](n) + n methanol + n H(+). It participates in glycan metabolism; pectin degradation; 2-dehydro-3-deoxy-D-gluconate from pectin: step 1/5. Its function is as follows. Acts in the modification of cell walls via demethylesterification of cell wall pectin. In Arabidopsis thaliana (Mouse-ear cress), this protein is Probable pectinesterase 30 (PME30).